We begin with the raw amino-acid sequence, 106 residues long: Transcription initiation factor IIA subunit 2 (106 aa).

This sequence belongs to the TFIIA subunit 2 family. As to quaternary structure, TFIIA is a heterodimer of the large unprocessed subunit 1 and a small subunit gamma. It was originally believed to be a heterotrimer of an alpha (p30), a beta (p20) and a gamma (p14) subunit. Forms a complex with Moonshiner/CG12721 and Trf2. In terms of tissue distribution, ubiquitous.

It localises to the nucleus. In terms of biological role, TFIIA is a component of the transcription machinery of RNA polymerase II and plays an important role in transcriptional activation. TFIIA in a complex with TBP mediates transcriptional activity. Part of a rhi-dependent transcription machinery that enables the generation of piRNA precursors from heterochromatin while maintaining the suppression of transposon-encoded promoters and enhancers. Forms a complex with Moonshiner/CG12721 and Trf2 which recruit transcriptional machinery to heterochromatin to initiate the bidirectional transcription of piRNA clusters, by interacting with the RDC (rhi, del and cuff) complex that binds to repressive H3K9me3 marks in the chromatin. This mechanism allows transcription to occur in piRNA clusters despite the lack of proper promoter elements and in the presence of the repressive H3K9me3 mark. This is Transcription initiation factor IIA subunit 2 (TfIIA-S) from Drosophila melanogaster (Fruit fly).